Consider the following 220-residue polypeptide: Pro-Pro endopeptidase (220 aa).

Positions 1 to 26 (MRPSKKLLIAIISIFLISSVPVSAHA) are cleaved as a signal peptide. Residues 35-220 (KDTLSQIVVF…TYSFLQNLAK (186 aa)) form the ATLF-like domain. 2 interacts with substrate peptide regions span residues 101-103 (KGW) and 117-119 (GGS). Histidine 142 contacts Zn(2+). Glutamate 143 acts as the Proton acceptor in catalysis. Zn(2+) contacts are provided by histidine 146, tyrosine 178, and glutamate 185.

It belongs to the peptidase M34 family. Pro-Pro endopeptidase subfamily. In terms of assembly, monomer. It depends on Zn(2+) as a cofactor.

The protein localises to the secreted. The catalysed reaction is The enzyme catalyzes the hydrolytic cleavage of peptide bonds between two proline residues.. With respect to regulation, is inhibited by the chelating agent o-phenanthroline in vitro. Functionally, zinc-dependent endoprotease with a unique preference for proline residues surrounding the scissile bond. Exhibits a high preference for an asparagine at the P2 position and hydrophobic residues (Val, Ile, Leu) at the P3 position. Efficiently cleaves the LPXTG cell surface proteins CD630_28310 and CD630_32460 at multiple cleavage sites in vivo. Has a role in the regulation of C.difficile adhesion versus motility by cleaving surface adhesion proteins such as the collagen binding protein CD630_28310, and is important for efficient infection. Is also able to cleave fibronectin and fibrinogen in vitro; cleaves at the N-terminus of the beta-chain of fibrinogen. Destabilizes the fibronectin network produced by human fibroblasts. Therefore, may be important in key steps of clostridial pathogenesis by degrading extracellular matrix components associated with the gut epithelial cells. To a lesser extent, IgA1, IgA2, and human HSP 90-beta, but not HSP 90-alpha, are also substrates for the enzyme. Is not active on different collagen types, casein and gelatin. The protein is Pro-Pro endopeptidase of Clostridioides difficile (strain 630) (Peptoclostridium difficile).